The chain runs to 134 residues: MRMLLHLSLLALGAAYVYAIPTEIPTSALVKETLALLSTHRTLLIANETLRIPVPVHKNHQLCTEEIFQGIGTLESQTVQGGTVERLFKNLSLIKKYIDGQKKKCGEERRRVNQFLDYLQEFLGVMNTEWIIES.

An N-terminal signal peptide occupies residues 1–19 (MRMLLHLSLLALGAAYVYA). A glycan (O-linked (GalNAc...) threonine) is linked at Thr-22. Asn-47 carries an N-linked (GlcNAc...) asparagine glycan.

The protein belongs to the IL-5 family. Homodimer; disulfide-linked. Interacts with IL5RA. Interacts with CSF2RB. In terms of tissue distribution, present in peripheral blood mononuclear cells.

It localises to the secreted. Its function is as follows. Homodimeric cytokine expressed predominantly by T-lymphocytes and NK cells that plays an important role in the survival, differentiation, and chemotaxis of eosinophils. Also acts on activated and resting B-cells to induce immunoglobulin production, growth, and differentiation. Mechanistically, exerts its biological effects through a receptor composed of IL5RA subunit and the cytokine receptor common subunit beta/CSF2RB. Binding to the receptor leads to activation of various kinases including LYN, SYK and JAK2 and thereby propagates signals through the RAS-MAPK and JAK-STAT5 pathways respectively. In Homo sapiens (Human), this protein is Interleukin-5 (IL5).